Consider the following 563-residue polypeptide: Endoglucanase B (563 aa).

Positions 1-27 form a signal peptide, or 31; it reads MKKFLVLLIALIMIATLLVVPGVQTSA. The active-site Proton donor is Glu204. Glu363 serves as the catalytic Nucleophile. The tract at residues 476–495 is disordered; it reads SVTPSPSATPSPTTITAPPT. The region spanning 496–562 is the Dockerin domain; that stretch reads DTVTYGDVNG…VLRSISELPY (67 aa).

This sequence belongs to the glycosyl hydrolase 5 (cellulase A) family.

It carries out the reaction Endohydrolysis of (1-&gt;4)-beta-D-glucosidic linkages in cellulose, lichenin and cereal beta-D-glucans.. In terms of biological role, this enzyme catalyzes the endohydrolysis of 1,4-beta-glucosidic linkages in cellulose, lichenin and cereal beta-D-glucans. The protein is Endoglucanase B (celB) of Acetivibrio thermocellus (strain ATCC 27405 / DSM 1237 / JCM 9322 / NBRC 103400 / NCIMB 10682 / NRRL B-4536 / VPI 7372) (Clostridium thermocellum).